Reading from the N-terminus, the 151-residue chain is Ribosome maturation factor RimP (151 aa).

The protein belongs to the RimP family.

It localises to the cytoplasm. Functionally, required for maturation of 30S ribosomal subunits. This is Ribosome maturation factor RimP from Shewanella oneidensis (strain ATCC 700550 / JCM 31522 / CIP 106686 / LMG 19005 / NCIMB 14063 / MR-1).